Here is a 314-residue protein sequence, read N- to C-terminus: Taste receptor type 2 member 42 (314 aa).

Over 1-7 (MATELDK) the chain is Extracellular. The helical transmembrane segment at 8 to 28 (IFLILEIAEFIIGMLGNVFIG) threads the bilayer. At 29-50 (LVNCSEGIKNQKVFSADFILTC) the chain is on the cytoplasmic side. The helical transmembrane segment at 51 to 71 (LAISTIGQLFVILFDSFLVGL) threads the bilayer. At 72 to 101 (ASHLYTTYRLGKPVIMLWHMTNHLTTWLAT) the chain is on the extracellular side. The chain crosses the membrane as a helical span at residues 102–122 (CLSIFYFFKIAHFPHSLFLWL). Over 123 to 127 (RWRMN) the chain is Cytoplasmic. The helical transmembrane segment at 128–148 (GMIVMLLILSLFLLIFDSLVL) threads the bilayer. Topologically, residues 149-187 (EIFIDISLNIIDKSNLTLYLDESKTLYDKLSILKTLLSL) are extracellular. A glycan (N-linked (GlcNAc...) asparagine) is linked at Asn163. A helical transmembrane segment spans residues 188-208 (TSFIPFSLSLTSLLFFFLSLV). The Cytoplasmic segment spans residues 209 to 238 (RHTRNLKLSSLGSRDSSTEAHRRAMKMVMS). Residues 239–259 (FLFLFIVHFFSLQVANWIFFM) traverse the membrane as a helical segment. Residues 260 to 265 (LWNNKY) are Extracellular-facing. Residues 266-286 (IKFAMLALNAFPSCHSFILIL) traverse the membrane as a helical segment. Over 287–314 (GNSKLRQTAVRLLWHLRNYTKTPNALPL) the chain is Cytoplasmic.

It belongs to the G-protein coupled receptor T2R family.

The protein localises to the membrane. In terms of biological role, receptor that may play a role in the perception of bitterness and is gustducin-linked. May play a role in sensing the chemical composition of the gastrointestinal content. The activity of this receptor may stimulate alpha gustducin, mediate PLC-beta-2 activation and lead to the gating of TRPM5. The chain is Taste receptor type 2 member 42 (TAS2R42) from Pan paniscus (Pygmy chimpanzee).